The following is a 118-amino-acid chain: Large ribosomal subunit protein bL20 (118 aa).

Belongs to the bacterial ribosomal protein bL20 family.

Functionally, binds directly to 23S ribosomal RNA and is necessary for the in vitro assembly process of the 50S ribosomal subunit. It is not involved in the protein synthesizing functions of that subunit. The polypeptide is Large ribosomal subunit protein bL20 (Caulobacter vibrioides (strain ATCC 19089 / CIP 103742 / CB 15) (Caulobacter crescentus)).